An 86-amino-acid chain; its full sequence is UPF0297 protein SH1302 (86 aa).

The protein belongs to the UPF0297 family.

In Staphylococcus haemolyticus (strain JCSC1435), this protein is UPF0297 protein SH1302.